The sequence spans 336 residues: Holliday junction branch migration complex subunit RuvB (336 aa).

The interval 4–184 is large ATPase domain (RuvB-L); that stretch reads ADRLISAGAT…FGIVQRLEFY (181 aa). ATP-binding positions include Ile23, Arg24, Gly65, Lys68, Thr69, Thr70, 131–133, Arg174, Tyr184, and Arg221; that span reads EDY. Thr69 is a binding site for Mg(2+). Positions 185–255 are small ATPAse domain (RuvB-S); that stretch reads QVPDLQHIVG…IAAQALDMLN (71 aa). Residues 258-336 form a head domain (RuvB-H) region; sequence AEGFDYMDRK…HFGITPPEMP (79 aa). Residues Arg294, Arg313, and Arg318 each contribute to the DNA site.

The protein belongs to the RuvB family. In terms of assembly, homohexamer. Forms an RuvA(8)-RuvB(12)-Holliday junction (HJ) complex. HJ DNA is sandwiched between 2 RuvA tetramers; dsDNA enters through RuvA and exits via RuvB. An RuvB hexamer assembles on each DNA strand where it exits the tetramer. Each RuvB hexamer is contacted by two RuvA subunits (via domain III) on 2 adjacent RuvB subunits; this complex drives branch migration. In the full resolvosome a probable DNA-RuvA(4)-RuvB(12)-RuvC(2) complex forms which resolves the HJ.

It is found in the cytoplasm. The enzyme catalyses ATP + H2O = ADP + phosphate + H(+). Its function is as follows. The RuvA-RuvB-RuvC complex processes Holliday junction (HJ) DNA during genetic recombination and DNA repair, while the RuvA-RuvB complex plays an important role in the rescue of blocked DNA replication forks via replication fork reversal (RFR). RuvA specifically binds to HJ cruciform DNA, conferring on it an open structure. The RuvB hexamer acts as an ATP-dependent pump, pulling dsDNA into and through the RuvAB complex. RuvB forms 2 homohexamers on either side of HJ DNA bound by 1 or 2 RuvA tetramers; 4 subunits per hexamer contact DNA at a time. Coordinated motions by a converter formed by DNA-disengaged RuvB subunits stimulates ATP hydrolysis and nucleotide exchange. Immobilization of the converter enables RuvB to convert the ATP-contained energy into a lever motion, pulling 2 nucleotides of DNA out of the RuvA tetramer per ATP hydrolyzed, thus driving DNA branch migration. The RuvB motors rotate together with the DNA substrate, which together with the progressing nucleotide cycle form the mechanistic basis for DNA recombination by continuous HJ branch migration. Branch migration allows RuvC to scan DNA until it finds its consensus sequence, where it cleaves and resolves cruciform DNA. The polypeptide is Holliday junction branch migration complex subunit RuvB (Salmonella arizonae (strain ATCC BAA-731 / CDC346-86 / RSK2980)).